The sequence spans 1493 residues: Protein RNA-directed DNA methylation 3 (1493 aa).

Disordered stretches follow at residues 1-34 (MDRK…EGLR) and 54-96 (GYYG…SSFV). Residues 21 to 28 (KRKNSVEF) carry the Nuclear localization signal motif. A compositionally biased stretch (basic and acidic residues) spans 24 to 34 (NSVEFRDEGLR). Acidic residues predominate over residues 60–80 (SDEDDDGLGFLNDMEDEPEVE). Over residues 81–92 (ESSKAGKGEKGK) the composition is skewed to basic and acidic residues. Positions 239–266 (KVSEGTWARVKNGKYKGDLAQIVAVSDT) constitute a KOW 1 domain. The interval 393-432 (PTCREGGKGEGSGGGKGEGSGGGKGEGSRGGKGEGSSDFK) is disordered. Residues 401–417 (GEGSGGGKGEGSGGGKG) are compositionally biased toward gly residues. A compositionally biased stretch (basic and acidic residues) spans 418 to 432 (EGSRGGKGEGSSDFK). Positions 501–528 (QISVNDVVKISKGPSEGKQGVVRQVYRG) constitute a KOW 2 domain. The tract at residues 578-602 (SSPKSPLSPEKEWQPRERYNSSNQG) is disordered. Residues 586-596 (PEKEWQPRERY) show a composition bias toward basic and acidic residues. In terms of domain architecture, KOW 3 spans 607–634 (TYSIGQKLRIRVGPLKGYLCRVIALRYS). Disordered stretches follow at residues 692–711 (IGAG…PSTD), 728–747 (EKNP…TVAD), and 757–1493 (AAEN…KTGW). Copy 1 of the repeat occupies 732–741 (WGGSKPTSDV). Positions 732–1493 (WGGSKPTSDV…WGTGDKKTGW (762 aa)) are 42 X 9 AA approximate WG/GW-rich tandem repeats. The segment covering 757-767 (AAENKPASASD) has biased composition (low complexity). Tandem repeats lie at residues 775 to 784 (WGKTPASEAG), 789 to 797 (WGDTSASNV), 818 to 827 (WGTHGGSSGG), 836 to 845 (WGKLCEASES), 854 to 863 (WGKKGGSDGE), 866 to 875 (WGNKDGNSSA), 883 to 892 (WGQQDKGSDE), 917 to 926 (GWNKSAEDSN), 935 to 943 (WGQPNDGSS), 944 to 953 (WGKKGDGAAS), 954 to 962 (WGKKDDGGS), 963 to 972 (WGKKDDGNKD), 978 to 987 (WGKKDDGQKD), 1003 to 1012 (WGKKDDGGSS), 1013 to 1022 (WGKKDDGGSL), 1023 to 1032 (WGKKDDGGSS), 1033 to 1042 (WGKEDDGGSL), 1043 to 1052 (WGKKDDGESS), 1053 to 1062 (WGKKDDGESS), 1063 to 1072 (WGKKDDGGSS), 1073 to 1082 (WGKKDEGGYS), 1132 to 1141 (WGKQDGDGGG), 1144 to 1153 (WGKENDAGGG), 1156 to 1165 (WGKQDNGVGS), 1167 to 1176 (WGKQNDGSGG), 1180 to 1189 (WGKQNDAGGG), 1192 to 1201 (WGKQDSGGDG), 1204 to 1213 (WGKQDGGGDS), 1217 to 1226 (WGKQNNTSGG), 1229 to 1238 (WGKQSDAGGG), 1241 to 1250 (WGKQDGGGGG), 1253 to 1262 (WGKQDGGGGS), 1266 to 1275 (WGKQNETSNG), 1278 to 1287 (WGKQNDSGGG), 1290 to 1299 (WGKQDGGGGG), 1302 to 1311 (WGKQNDGGGG), and 1314 to 1323 (WGKQGDGGSK). The segment covering 790 to 812 (GDTSASNVEASSWEKQGASTSNV) has biased composition (polar residues). A compositionally biased stretch (basic and acidic residues) spans 846 to 860 (SQKKEESSWGKKGGS). Residues 866–875 (WGNKDGNSSA) are compositionally biased toward polar residues. A compositionally biased stretch (basic and acidic residues) spans 955–1090 (GKKDDGGSWG…YSEQTFDRGG (136 aa)). Low complexity predominate over residues 1122–1134 (PWSKPSGGSSWGK). Positions 1156-1172 (WGKQDNGVGSSWGKQND) are enriched in polar residues. The span at 1186 to 1213 (AGGGSSWGKQDSGGDGSSWGKQDGGGDS) shows a compositional bias: gly residues. A compositionally biased stretch (polar residues) spans 1218–1231 (GKQNNTSGGSSWGK). Residues 1235-1264 (AGGGSSWGKQDGGGGGSSWGKQDGGGGSGS) are compositionally biased toward gly residues. A compositionally biased stretch (polar residues) spans 1270-1283 (NETSNGSSWGKQND). A compositionally biased stretch (gly residues) spans 1284 to 1321 (SGGGSSWGKQDGGGGGSSWGKQNDGGGGSSWGKQGDGG). 2 stretches are compositionally biased toward polar residues: residues 1366 to 1382 (WKTD…QSGG) and 1392 to 1401 (DSNNSKPSGS). Repeat unit 39 spans residues 1389 to 1398 (WGEDSNNSKP). Basic and acidic residues predominate over residues 1416–1430 (NSKKETNDKPGDDSK). The span at 1432-1442 (AWGTSNDQVNT) shows a compositional bias: polar residues. Repeat copies occupy residues 1433-1442 (WGTSNDQVNT), 1467-1475 (WGGKTNAVA), and 1484-1493 (WGTGDKKTGW).

In terms of assembly, interacts with AGO4 via its C-terminal region and with RNA transcripts. Binds chromatin at loci subject to transcriptional silencing downstream of RNA Polymerase V, but independently from the presence of 24-nt siRNA.

Its subcellular location is the nucleus. The protein resides in the nucleoplasm. In terms of biological role, effector of RNA-directed DNA methylation (RdDM) triggered by small interfering RNAs (siRNAs, 24-nt RNAs). Functions as an adapter protein that binds scaffold transcripts generated by polymerase V and recruits AGO4 and AGO4-bound siRNAs to form an RdDM effector complex. Promotes the expression of 24-nt RNAs. Required for the initial establishment of DNA methylation. Together with AGO4, required for transcriptional gene silencing (TGS) by DNA methylation and repressive histone modifications (H3K9me2) of several chromatin loci. The chain is Protein RNA-directed DNA methylation 3 from Arabidopsis thaliana (Mouse-ear cress).